We begin with the raw amino-acid sequence, 363 residues long: U-box domain-containing protein 62 (363 aa).

Residues 74–117 (KPIIGNPNDSGGSDGEDDVDVEEEDEDDDLDGNEGDIGMNKDAG) form a disordered region. A compositionally biased stretch (acidic residues) spans 87–107 (DGEDDVDVEEEDEDDDLDGNE). The 73-residue stretch at 181–253 (SLRTILSDPT…QAFCREENSQ (73 aa)) folds into the U-box domain. Positions 343 to 363 (AKAPEDPSAKATPNKMVSNWL) are disordered.

It catalyses the reaction S-ubiquitinyl-[E2 ubiquitin-conjugating enzyme]-L-cysteine + [acceptor protein]-L-lysine = [E2 ubiquitin-conjugating enzyme]-L-cysteine + N(6)-ubiquitinyl-[acceptor protein]-L-lysine.. It participates in protein modification; protein ubiquitination. Functionally, functions as an E3 ubiquitin ligase. This is U-box domain-containing protein 62 (PUB62) from Arabidopsis thaliana (Mouse-ear cress).